Here is a 267-residue protein sequence, read N- to C-terminus: UDP-glucose:undecaprenyl-phosphate glucose-1-phosphate transferase (267 aa).

A helical membrane pass occupies residues 83 to 103; that stretch reads VAAALLTALFAPLLLLAALAI.

Belongs to the bacterial sugar transferase family.

It localises to the cell membrane. The catalysed reaction is di-trans,octa-cis-undecaprenyl phosphate + UDP-alpha-D-glucose = alpha-D-glucosyl di-trans,octa-cis-undecaprenyl diphosphate + UMP. Is likely the initiating enzyme for holdfast polysaccharide synthesis. Catalyzes the transfer of the glucose-1-phosphate moiety from UDP-Glc onto the carrier lipid undecaprenyl phosphate (C55-P), forming a phosphoanhydride bond yielding to glucosyl-pyrophosphoryl-undecaprenol (Glc-PP-C55). Also possesses a weak galactose-1-P transferase activity. This Caulobacter vibrioides (strain ATCC 19089 / CIP 103742 / CB 15) (Caulobacter crescentus) protein is UDP-glucose:undecaprenyl-phosphate glucose-1-phosphate transferase (pssY).